Reading from the N-terminus, the 149-residue chain is UPF0251 protein Moth_1655 (149 aa).

The segment at 129 to 149 is disordered; it reads AGRGPGRGRCHRHGRFGEGEH.

This sequence belongs to the UPF0251 family.

The sequence is that of UPF0251 protein Moth_1655 from Moorella thermoacetica (strain ATCC 39073 / JCM 9320).